The sequence spans 412 residues: Gamma-glutamyl phosphate reductase (412 aa).

It belongs to the gamma-glutamyl phosphate reductase family.

The protein resides in the cytoplasm. It carries out the reaction L-glutamate 5-semialdehyde + phosphate + NADP(+) = L-glutamyl 5-phosphate + NADPH + H(+). It participates in amino-acid biosynthesis; L-proline biosynthesis; L-glutamate 5-semialdehyde from L-glutamate: step 2/2. Catalyzes the NADPH-dependent reduction of L-glutamate 5-phosphate into L-glutamate 5-semialdehyde and phosphate. The product spontaneously undergoes cyclization to form 1-pyrroline-5-carboxylate. This Aliarcobacter butzleri (strain RM4018) (Arcobacter butzleri) protein is Gamma-glutamyl phosphate reductase.